A 599-amino-acid polypeptide reads, in one-letter code: Adenine deaminase (599 aa).

Belongs to the metallo-dependent hydrolases superfamily. Adenine deaminase family. It depends on Mn(2+) as a cofactor.

The enzyme catalyses adenine + H2O + H(+) = hypoxanthine + NH4(+). The polypeptide is Adenine deaminase (Clostridium botulinum (strain Langeland / NCTC 10281 / Type F)).